Reading from the N-terminus, the 628-residue chain is Netrin-4 (628 aa).

An N-terminal signal peptide occupies residues 1–18 (MGSCARLLLLWGCTVVAA). The Laminin N-terminal domain maps to 30-261 (CEKACNPRMG…AIYDFIVKGS (232 aa)). N56 and N163 each carry an N-linked (GlcNAc...) asparagine glycan. 12 disulfide bridges follow: C262–C271, C264–C293, C295–C304, C307–C329, C332–C341, C334–C359, C362–C371, C374–C392, C395–C413, C397–C420, C422–C431, and C434–C446. 3 Laminin EGF-like domains span residues 262-331 (CFCN…ECRT), 332-394 (CKCN…ACKP), and 395-448 (CSCH…GCRP). N353 carries an N-linked (GlcNAc...) asparagine glycan. N483 is a glycosylation site (N-linked (GlcNAc...) asparagine). 2 disulfide bridges follow: C506–C576 and C520–C627. The 122-residue stretch at 506 to 627 (CECKEQTLGN…KVMDILKREC (122 aa)) folds into the NTR domain.

As to quaternary structure, may form a homodimer.

Its subcellular location is the secreted. The protein localises to the extracellular space. It is found in the extracellular matrix. Functionally, may play an important role in neural, kidney and vascular development. This is Netrin-4 (NTN4) from Pongo abelii (Sumatran orangutan).